The following is a 383-amino-acid chain: Thioredoxin reductase 2 (383 aa).

FAD-binding positions include serine 66–alanine 69, phenylalanine 87–glutamate 88, isoleucine 95–glutamine 100, asparagine 109, valine 142, cysteine 200, aspartate 345, and arginine 352–alanine 354. A disulfide bridge connects residues cysteine 197 and cysteine 200.

This sequence belongs to the class-II pyridine nucleotide-disulfide oxidoreductase family. Homodimer. Requires FAD as cofactor.

It is found in the cytoplasm. The protein localises to the mitochondrion matrix. The enzyme catalyses [thioredoxin]-dithiol + NADP(+) = [thioredoxin]-disulfide + NADPH + H(+). Its function is as follows. Possesses thioredoxin-disulfide reductase activity towards thioredoxins O1, O2 and F3. This is Thioredoxin reductase 2 (NTR2) from Arabidopsis thaliana (Mouse-ear cress).